Reading from the N-terminus, the 267-residue chain is MENLYALILGIIEGLTEFLPISSTGHMILGTTILGIDIDEFWKSFLIIIQLGSILAVIFVFWRKLFQGLDIWLKLAVGFFPTGVIGLFVAKYLNALFNGWVVVGMLIFGGVVFILIELAHKNKQYRINSLEEISFKQAFCIGIFQSLAMIPGTSRSGASIIGGLLLEFNRKVAAEFSFLLAIPTMIIATAYSIYKEPELLGNANSLIPLGIGFITAFIVAVLVIKFFLKFISKFDFIPFGIYRIILGFVFFYLYYSGILNAGSEFKL.

Helical transmembrane passes span 4-24 (LYAL…ISST), 41-61 (FWKS…IFVF), 69-89 (LDIW…GLFV), 96-116 (LFNG…FILI), 173-193 (AAEF…AYSI), 207-227 (IPLG…IKFF), and 239-259 (FGIY…SGIL).

Belongs to the UppP family.

It localises to the cell inner membrane. It catalyses the reaction di-trans,octa-cis-undecaprenyl diphosphate + H2O = di-trans,octa-cis-undecaprenyl phosphate + phosphate + H(+). Catalyzes the dephosphorylation of undecaprenyl diphosphate (UPP). Confers resistance to bacitracin. The chain is Undecaprenyl-diphosphatase from Campylobacter jejuni subsp. jejuni serotype O:2 (strain ATCC 700819 / NCTC 11168).